A 122-amino-acid chain; its full sequence is uncharacterized protein (122 aa).

It localises to the mitochondrion. This is an uncharacterized protein from Claviceps purpurea (Ergot fungus).